We begin with the raw amino-acid sequence, 284 residues long: Bifunctional protein FolD (284 aa).

Residues 165 to 167 (GRS) and Ser-190 each bind NADP(+).

The protein belongs to the tetrahydrofolate dehydrogenase/cyclohydrolase family. In terms of assembly, homodimer.

It catalyses the reaction (6R)-5,10-methylene-5,6,7,8-tetrahydrofolate + NADP(+) = (6R)-5,10-methenyltetrahydrofolate + NADPH. The enzyme catalyses (6R)-5,10-methenyltetrahydrofolate + H2O = (6R)-10-formyltetrahydrofolate + H(+). It functions in the pathway one-carbon metabolism; tetrahydrofolate interconversion. Catalyzes the oxidation of 5,10-methylenetetrahydrofolate to 5,10-methenyltetrahydrofolate and then the hydrolysis of 5,10-methenyltetrahydrofolate to 10-formyltetrahydrofolate. This chain is Bifunctional protein FolD, found in Streptococcus mutans serotype c (strain ATCC 700610 / UA159).